A 470-amino-acid chain; its full sequence is Methylenetetrahydrofolate--tRNA-(uracil-5-)-methyltransferase TrmFO (470 aa).

Position 10 to 15 (10 to 15) interacts with FAD; the sequence is GAGLAG.

It belongs to the MnmG family. TrmFO subfamily. The cofactor is FAD.

It is found in the cytoplasm. It carries out the reaction uridine(54) in tRNA + (6R)-5,10-methylene-5,6,7,8-tetrahydrofolate + NADH + H(+) = 5-methyluridine(54) in tRNA + (6S)-5,6,7,8-tetrahydrofolate + NAD(+). The catalysed reaction is uridine(54) in tRNA + (6R)-5,10-methylene-5,6,7,8-tetrahydrofolate + NADPH + H(+) = 5-methyluridine(54) in tRNA + (6S)-5,6,7,8-tetrahydrofolate + NADP(+). In terms of biological role, catalyzes the folate-dependent formation of 5-methyl-uridine at position 54 (M-5-U54) in all tRNAs. This chain is Methylenetetrahydrofolate--tRNA-(uracil-5-)-methyltransferase TrmFO, found in Prochlorococcus marinus subsp. pastoris (strain CCMP1986 / NIES-2087 / MED4).